The primary structure comprises 504 residues: MAPKTGETVVEKMEVDEAKQDVPATEPAKDLNAIAVENIKEQLAALDKGEEHLITRVLQVLPKTRKQINDNVLYKLVSSHLSSDAQFAEGMLKYLHYTPAADTEVQPMDTSNVKTKSPKKGVKPVFASPESDCYLRLLVLLHLYAQKKNTEALALGENQLTSIYNFDRRTLDGLAAKTLYFLCVIYEREGRLFDHQGFLNSRLRTATLRNFSESQAVLICWLLRCYLINRQYQSAAHLVSKVAFPDNASNNDLARYMYYQGRIKALQLDYNSAAGYFLQAQRKAPQEGAIGFKQAVQKWVVVIGLLQGEIPDRSVFRQPIYRKCLAHYLDLSRGVRDGDVARFNHNLEQFKTQFEADDTLTLIVRLRQNVIKTAIKQISLAYSRIYIKDIAKKLYITNETETEYIVAKAIADGAIDAVITSDVRDGPRYMQSSETADIYRTSEPQAHFDTRIRYCLELHNQAVKALRYPPKKKIAVETIEQAREREQQELEFAKELADEDDDDF.

A PCI domain is found at alanine 254–serine 433.

The protein belongs to the proteasome subunit S3 family. The 26S proteasome is composed of a core protease, known as the 20S proteasome, capped at one or both ends by the 19S regulatory complex (RC). The RC is composed of at least 18 different subunits in two subcomplexes, the base and the lid, which form the portions proximal and distal to the 20S proteolytic core, respectively.

Acts as a regulatory subunit of the 26 proteasome which is involved in the ATP-dependent degradation of ubiquitinated proteins. In Caenorhabditis elegans, this protein is 26S proteasome non-ATPase regulatory subunit 3 (rpn-3).